The chain runs to 504 residues: Zinc finger CCCH domain-containing protein 18 (504 aa).

Positions 40-69 (SNADLLEVHEELLAAIKDAEEGLLHLKRSR) form a coiled coil. Positions 77 to 105 (IFPNQEPTSEAPEVAVDPPDDVEPEPLEP) are disordered. Positions 94–104 (PPDDVEPEPLE) are enriched in acidic residues. The segment at 146–173 (SENMSMCKFFLQQRCRFGSNCRLSHGIV) adopts a C3H1-type zinc-finger fold. The interval 230–276 (GSSARLPSDSLSISEYADESDEDGEGSSSDEGSDFSEDGDQEDESVH) is disordered. Acidic residues-rich tracts occupy residues 245-254 (YADESDEDGE) and 260-272 (EGSDFSEDGDQED). A G-patch domain is found at 304-350 (TRGVASKMMAKMGYREGMGLGVSGQGMLDPIPVKVLPPKQSLDHAVA). Disordered stretches follow at residues 351-390 (ASEVNDSVGPGKKRSRGGKRKREKKFAEQARAAKAEEEER), 406-432 (AEGSAVKSKKDSSGEANGHAKKEDRRS), and 482-504 (EATHASATNAVARKEKEKKWLKF). The span at 361–374 (GKKRSRGGKRKREK) shows a compositional bias: basic residues. 3 stretches are compositionally biased toward basic and acidic residues: residues 375–390 (KFAEQARAAKAEEEER), 413–432 (SKKDSSGEANGHAKKEDRRS), and 493–504 (ARKEKEKKWLKF). The stretch at 430–500 (RRSLLAYDDE…AVARKEKEKK (71 aa)) forms a coiled coil.

This chain is Zinc finger CCCH domain-containing protein 18, found in Oryza sativa subsp. japonica (Rice).